Consider the following 142-residue polypeptide: Putative pre-16S rRNA nuclease (142 aa).

Belongs to the YqgF nuclease family.

The protein resides in the cytoplasm. Its function is as follows. Could be a nuclease involved in processing of the 5'-end of pre-16S rRNA. This Nitratidesulfovibrio vulgaris (strain DSM 19637 / Miyazaki F) (Desulfovibrio vulgaris) protein is Putative pre-16S rRNA nuclease.